A 271-amino-acid polypeptide reads, in one-letter code: Protein FAM110D (271 aa).

Positions 1 to 13 are enriched in polar residues; the sequence is MLLSSPTTPSRGR. Disordered regions lie at residues 1-84, 118-149, and 186-242; these read MLLS…PDSL, DAAP…TGKR, and PQSW…GRPT.

Belongs to the FAM110 family.

This is Protein FAM110D from Mus musculus (Mouse).